The chain runs to 467 residues: Uronate isomerase (467 aa).

This sequence belongs to the metallo-dependent hydrolases superfamily. Uronate isomerase family.

It carries out the reaction D-glucuronate = D-fructuronate. The enzyme catalyses aldehydo-D-galacturonate = keto-D-tagaturonate. Its pathway is carbohydrate metabolism; pentose and glucuronate interconversion. This chain is Uronate isomerase, found in Solibacter usitatus (strain Ellin6076).